Consider the following 150-residue polypeptide: UPF0506 protein SJCHGC09643 (150 aa).

The N-terminal stretch at 1-18 (MNTCIQLLILCLVTVINS) is a signal peptide. N-linked (GlcNAc...) asparagine glycosylation is found at Asn20, Asn32, Asn48, and Asn110. 3 disulfides stabilise this stretch: Cys116-Cys130, Cys123-Cys134, and Cys129-Cys139.

The protein belongs to the UPF0506 family.

It is found in the secreted. In Schistosoma japonicum (Blood fluke), this protein is UPF0506 protein SJCHGC09643.